The following is a 612-amino-acid chain: MAFTIEVEEWVGSVWHRFITRRASPDFPEARVDLESMQRSLSLMFRAMGGASGVGVEAASARDLVLRRNLLQQVAGTCMQLPVAWCDSSNLRLPQSLAVYPEVSLNQDLYRWLALIAAQAGQMRHWARDNQRWTQALLEQFPAMRPRYQRLVEAHLQLRPDPKQLPKAEAALEAALCQALREPGSVSQFPRCERAPWPLSLWLYPAENLGEPQAVYRVEEGEGDLETPPSGQSRQRNGARRVDDSSSKGGLLLFRLENLFSWSEHVELDRCDDDTEDLDAARVRGPRRTGSVAPRMRQGGGLKLDLDLPASDFDDVPLGEGIKLPEWNYRKQCLQKDFVNLQMMLPCGSEPKPLPLRLSPLARRLRRQFEHLRNDRQWLRQQPQGSELDMQAWLDFHVERQNGQCAERGLFMEQRQNRRDLACLLLADLSMSTDAHLDNEHRVIDVVIDSLLLFGERLSAVGDPFALYGFSSLRRQQVRMQELKSFRQPYGDETRGRIQALKPGYYTRMGAAIRQATELLGNCKQRRKLLLLVTDGKPNDLDLYEGRYGVEDTRQAVMEARRQGLLPFCITIDREAGDYLPYMFGANGYTLIKEPQQSAFPPAAAVQATDPA.

Positions 220 to 246 are disordered; it reads EGEGDLETPPSGQSRQRNGARRVDDSS. The region spanning 420–609 is the VWFA domain; sequence DLACLLLADL…FPPAAAVQAT (190 aa).

Its function is as follows. Component of the anaerobic respiratory chain that transforms nitrate to dinitrogen (denitrification). The sequence is that of Protein NorD (norD) from Stutzerimonas stutzeri (Pseudomonas stutzeri).